Reading from the N-terminus, the 229-residue chain is 2,3-bisphosphoglycerate-dependent phosphoglycerate mutase 2 (229 aa).

Substrate is bound by residues 12–19 (RHGESVAN), 25–26 (TG), R65, 92–95 (ERHY), K103, and 119–120 (RR). H13 serves as the catalytic Tele-phosphohistidine intermediate. The Proton donor/acceptor role is filled by E92.

Belongs to the phosphoglycerate mutase family. BPG-dependent PGAM subfamily.

It carries out the reaction (2R)-2-phosphoglycerate = (2R)-3-phosphoglycerate. Its pathway is carbohydrate degradation; glycolysis; pyruvate from D-glyceraldehyde 3-phosphate: step 3/5. Functionally, catalyzes the interconversion of 2-phosphoglycerate and 3-phosphoglycerate. This Lactobacillus johnsonii (strain CNCM I-12250 / La1 / NCC 533) protein is 2,3-bisphosphoglycerate-dependent phosphoglycerate mutase 2.